A 359-amino-acid chain; its full sequence is Peptide chain release factor 1 (359 aa).

Q238 carries the N5-methylglutamine modification.

This sequence belongs to the prokaryotic/mitochondrial release factor family. Methylated by PrmC. Methylation increases the termination efficiency of RF1.

The protein resides in the cytoplasm. In terms of biological role, peptide chain release factor 1 directs the termination of translation in response to the peptide chain termination codons UAG and UAA. This Rhodococcus jostii (strain RHA1) protein is Peptide chain release factor 1.